We begin with the raw amino-acid sequence, 388 residues long: MNEIKKKQIAILGSTGSIGTQALQVIEEHPELYEVYALTANNKVDLLIAQARKFMPEAVVIANEEKYAQLKEALSDLPVKVYAGAAALCQIVESGPIDVVLTAMVGYAGLKPTMNAIRAGKAIALANKETLVVAGELINQLARQYRTPILPVDSEHSAVFQCLAGEVGNPIEKVILTASGGPFRTCTMEQLKTVTKVQALKHPNWEMGAKITIDSASMMNKGFEVIEAKWLFGVQPGQIEVVVHPQSVIHSMVQFEDGAIKAQLGMPDMRLPIQYAFSYPDRINSSFDRLDFSKCTNLTFEQPDTKRFRNLALAYESMYRGGNMPCIVNAANEVVVAAFLRDEISFLGMSDVIEHTMGQVSFVQTPTYDDYVATDAEARRIARELICK.

T15, G16, S17, I18, and N127 together coordinate NADPH. K128 lines the 1-deoxy-D-xylulose 5-phosphate pocket. E129 contacts NADPH. D153 lines the Mn(2+) pocket. Positions 154, 155, 179, and 202 each coordinate 1-deoxy-D-xylulose 5-phosphate. E155 contacts Mn(2+). Position 208 (G208) interacts with NADPH. 4 residues coordinate 1-deoxy-D-xylulose 5-phosphate: S215, N220, K221, and E224. E224 contributes to the Mn(2+) binding site.

Belongs to the DXR family. It depends on Mg(2+) as a cofactor. Mn(2+) serves as cofactor.

The catalysed reaction is 2-C-methyl-D-erythritol 4-phosphate + NADP(+) = 1-deoxy-D-xylulose 5-phosphate + NADPH + H(+). It participates in isoprenoid biosynthesis; isopentenyl diphosphate biosynthesis via DXP pathway; isopentenyl diphosphate from 1-deoxy-D-xylulose 5-phosphate: step 1/6. Catalyzes the NADPH-dependent rearrangement and reduction of 1-deoxy-D-xylulose-5-phosphate (DXP) to 2-C-methyl-D-erythritol 4-phosphate (MEP). This chain is 1-deoxy-D-xylulose 5-phosphate reductoisomerase, found in Bacteroides fragilis (strain YCH46).